A 382-amino-acid chain; its full sequence is Queuine tRNA-ribosyltransferase (382 aa).

Aspartate 93 serves as the catalytic Proton acceptor. Residues 93-97 (DSGGF), aspartate 147, glutamine 191, and glycine 218 each bind substrate. Residues 249–255 (GVGKPED) are RNA binding. Aspartate 268 functions as the Nucleophile in the catalytic mechanism. The interval 273–277 (TRNAR) is RNA binding; important for wobble base 34 recognition. Zn(2+)-binding residues include cysteine 306, cysteine 308, cysteine 311, and histidine 337.

Belongs to the queuine tRNA-ribosyltransferase family. In terms of assembly, homodimer. Within each dimer, one monomer is responsible for RNA recognition and catalysis, while the other monomer binds to the replacement base PreQ1. Zn(2+) serves as cofactor.

It carries out the reaction 7-aminomethyl-7-carbaguanine + guanosine(34) in tRNA = 7-aminomethyl-7-carbaguanosine(34) in tRNA + guanine. It functions in the pathway tRNA modification; tRNA-queuosine biosynthesis. Catalyzes the base-exchange of a guanine (G) residue with the queuine precursor 7-aminomethyl-7-deazaguanine (PreQ1) at position 34 (anticodon wobble position) in tRNAs with GU(N) anticodons (tRNA-Asp, -Asn, -His and -Tyr). Catalysis occurs through a double-displacement mechanism. The nucleophile active site attacks the C1' of nucleotide 34 to detach the guanine base from the RNA, forming a covalent enzyme-RNA intermediate. The proton acceptor active site deprotonates the incoming PreQ1, allowing a nucleophilic attack on the C1' of the ribose to form the product. After dissociation, two additional enzymatic reactions on the tRNA convert PreQ1 to queuine (Q), resulting in the hypermodified nucleoside queuosine (7-(((4,5-cis-dihydroxy-2-cyclopenten-1-yl)amino)methyl)-7-deazaguanosine). The polypeptide is Queuine tRNA-ribosyltransferase (Actinobacillus pleuropneumoniae serotype 5b (strain L20)).